Consider the following 159-residue polypeptide: RNA pyrophosphohydrolase (159 aa).

Positions 6–149 constitute a Nudix hydrolase domain; that stretch reads GFRPNVGIIL…KREVYRRALK (144 aa). Residues 38–59 carry the Nudix box motif; sequence GGINDRETPEEALYRELNEEVG.

It belongs to the Nudix hydrolase family. RppH subfamily. A divalent metal cation is required as a cofactor.

In terms of biological role, accelerates the degradation of transcripts by removing pyrophosphate from the 5'-end of triphosphorylated RNA, leading to a more labile monophosphorylated state that can stimulate subsequent ribonuclease cleavage. This Pseudomonas aeruginosa (strain LESB58) protein is RNA pyrophosphohydrolase.